A 336-amino-acid polypeptide reads, in one-letter code: GTP 3',8-cyclase (336 aa).

A Radical SAM core domain is found at Ala-16–Ala-241. GTP is bound at residue Arg-25. Residues Cys-32 and Cys-36 each coordinate [4Fe-4S] cluster. Residue Tyr-38 coordinates S-adenosyl-L-methionine. Cys-39 contributes to the [4Fe-4S] cluster binding site. GTP is bound at residue Arg-75. Residue Gly-79 coordinates S-adenosyl-L-methionine. Thr-106 is a GTP binding site. Residue Ser-130 coordinates S-adenosyl-L-methionine. Lys-167 contributes to the GTP binding site. Position 201 (Met-201) interacts with S-adenosyl-L-methionine. [4Fe-4S] cluster-binding residues include Cys-264 and Cys-267. Arg-269–Arg-271 is a GTP binding site. [4Fe-4S] cluster is bound at residue Cys-281.

It belongs to the radical SAM superfamily. MoaA family. As to quaternary structure, monomer and homodimer. The cofactor is [4Fe-4S] cluster.

It catalyses the reaction GTP + AH2 + S-adenosyl-L-methionine = (8S)-3',8-cyclo-7,8-dihydroguanosine 5'-triphosphate + 5'-deoxyadenosine + L-methionine + A + H(+). Its pathway is cofactor biosynthesis; molybdopterin biosynthesis. Catalyzes the cyclization of GTP to (8S)-3',8-cyclo-7,8-dihydroguanosine 5'-triphosphate. This is GTP 3',8-cyclase from Actinobacillus succinogenes (strain ATCC 55618 / DSM 22257 / CCUG 43843 / 130Z).